Here is a 43-residue protein sequence, read N- to C-terminus: MARWCPPANRSASAAATCSSVVANTACMRWCKKRSQCPARRTP.

The sequence is that of Phi-Lf prophage-derived putative minor coat protein (gVII-1) from Xanthomonas campestris pv. campestris (strain ATCC 33913 / DSM 3586 / NCPPB 528 / LMG 568 / P 25).